The chain runs to 375 residues: Growth/differentiation factor 8 (375 aa).

The signal sequence occupies residues 1 to 23 (MQKLQLCVYIYLFMLIVAGPVDL). The propeptide occupies 24 to 266 (NENSEQKENV…VTDTPKRSRR (243 aa)). The N-linked (GlcNAc...) asparagine glycan is linked to Asn-71. 4 cysteine pairs are disulfide-bonded: Cys-272–Cys-282, Cys-281–Cys-340, Cys-309–Cys-372, and Cys-313–Cys-374.

This sequence belongs to the TGF-beta family. Homodimer; disulfide-linked. Interacts with WFIKKN2, leading to inhibit its activity. Interacts with FST3. Post-translationally, synthesized as large precursor molecule that undergoes proteolytic cleavage to generate an N-terminal propeptide and a disulfide linked C-terminal dimer, which is the biologically active molecule. The circulating form consists of a latent complex of the C-terminal dimer and other proteins, including its propeptide, which maintain the C-terminal dimer in a latent, inactive state. Ligand activation requires additional cleavage of the prodomain by a tolloid-like metalloproteinase.

It localises to the secreted. In terms of biological role, acts specifically as a negative regulator of skeletal muscle growth. The polypeptide is Growth/differentiation factor 8 (MSTN) (Homo sapiens (Human)).